We begin with the raw amino-acid sequence, 196 residues long: Small nuclear ribonucleoprotein-associated protein B (196 aa).

The region spanning 7 to 101 (AHSSRLANLI…ILSTVVEDKP (95 aa)) is the Sm domain. Residues 105-132 (KKERLVRDKKEKKQAQKQTKLRKEKEKK) carry the Nuclear localization signal motif. Positions 108–118 (RLVRDKKEKKQ) are enriched in basic and acidic residues. A disordered region spans residues 108-196 (RLVRDKKEKK…FQPPPGFKRK (89 aa)). Residues 140–181 (NTANAKHTSSNSREIAQPSSSRYNGGNDNIGANRSRFNNEAP) are compositionally biased toward polar residues.

The protein belongs to the snRNP SmB/SmN family. In terms of assembly, component of the Sm core complex, present in spliceosomal snRNP U1, U2, U4/U6 and U5. The core complex contains SMB1, SMD1, SMD2, SMD3, SME1, SMX3 and SMX2 (Sm proteins B, D1, D2, D3, E, F and G, respectively), and is probably a heptameric ring structure. SMB1 specifically interacts with SMD3. Belongs to the CWC complex (or CEF1-associated complex), a spliceosome sub-complex reminiscent of a late-stage spliceosome composed of the U2, U5 and U6 snRNAs and at least BUD13, BUD31, BRR2, CDC40, CEF1, CLF1, CUS1, CWC2, CWC15, CWC21, CWC22, CWC23, CWC24, CWC25, CWC27, ECM2, HSH155, IST3, ISY1, LEA1, MSL1, NTC20, PRP8, PRP9, PRP11, PRP19, PRP21, PRP22, PRP45, PRP46, SLU7, SMB1, SMD1, SMD2, SMD3, SMX2, SMX3, SNT309, SNU114, SPP2, SYF1, SYF2, RSE1 and YJU2. Component of the U4/U6-U5 tri-snRNP complex composed of the U4, U6 and U5 snRNAs and at least PRP3, PRP4, PRP6, PRP8, PRP18, PRP38, SNU13, SNU23, SNU66, SNU114, SPP381, SMB1, SMD1, SMD2, SMD3, SMX2, SMX3, LSM2, LSM3, LSM4, LSM5, LSM6, LSM7, LSM8, BRR2 and DIB1. Interacts with the trimethylguanosine synthase TGS1.

Its subcellular location is the nucleus. The protein localises to the cytoplasm. Its function is as follows. Plays a role in pre-mRNA splicing as a core component of the spliceosomal U1, U2, U4 and U5 small nuclear ribonucleoproteins (snRNPs), the building blocks of the spliceosome. This chain is Small nuclear ribonucleoprotein-associated protein B (SMB1), found in Saccharomyces cerevisiae (strain ATCC 204508 / S288c) (Baker's yeast).